Here is a 296-residue protein sequence, read N- to C-terminus: Putative thiosulfate sulfurtransferase SseA (296 aa).

Rhodanese domains are found at residues 31–138 (GKPG…DTSL) and 168–286 (ILGT…VPIT). Catalysis depends on C245, which acts as the Cysteine persulfide intermediate. R250 lines the substrate pocket.

The catalysed reaction is thiosulfate + hydrogen cyanide = thiocyanate + sulfite + 2 H(+). This Mycobacterium leprae (strain TN) protein is Putative thiosulfate sulfurtransferase SseA (sseA).